The following is a 73-amino-acid chain: UPF0337 protein lp_1708 (73 aa).

Basic and acidic residues-rich tracts occupy residues 1–35 (MSDV…REAQ) and 44–73 (KAKD…KSDD). The segment at 1–73 (MSDVNKKFDS…KDKMKKKSDD (73 aa)) is disordered.

The protein belongs to the UPF0337 (CsbD) family.

The chain is UPF0337 protein lp_1708 from Lactiplantibacillus plantarum (strain ATCC BAA-793 / NCIMB 8826 / WCFS1) (Lactobacillus plantarum).